We begin with the raw amino-acid sequence, 427 residues long: MTVPSAEELDSFKYSDLQNLAKRLGLRANMKADKLLKALKAHLNPETRKENKNQDENQFSTDETEIHVSSEEQAETESGGHVTKTRRRRRKKHKTIHGIPTSQTLLQDHLEMKGTDSSNFQNQENQENQDPRDTAEVPSLPEQRPEDGNAASSGEGEVNDIKDSKKPLEKRSLCTDEFSKLGNNKRTSATTPNFKKLHEARFKKMESIDEYIMRKKKHLKEHSSLNELKLDKKGIVTPVPPRGRLSVPCTPARQQCPQGHSATKMNVRFSAATKDNEHKCSLTKTPARKSPHVTAPGSASKGQAVFRTPKSKATERTSIAVITPFKLMTEATQTPSSSKKPVFDLKASLSRPLNYKPHKGKLKPWGQAKENNSLNERVSRVTFHRKTYKQPHLQTREERWKRQEQERKEKKEKLLEARRNLGVTKAQ.

A disordered region spans residues 41–190 (AHLNPETRKE…LGNNKRTSAT (150 aa)). The span at 43–55 (LNPETRKENKNQD) shows a compositional bias: basic and acidic residues. The span at 83–96 (TKTRRRRRKKHKTI) shows a compositional bias: basic residues. The segment covering 119–128 (NFQNQENQEN) has biased composition (low complexity). The residue at position 139 (S139) is a Phosphoserine. The segment covering 159–179 (NDIKDSKKPLEKRSLCTDEFS) has biased composition (basic and acidic residues). Residues 181–190 (LGNNKRTSAT) show a composition bias toward polar residues. Phosphothreonine is present on T191. The disordered stretch occupies residues 235–312 (IVTPVPPRGR…QAVFRTPKSK (78 aa)). The segment at 243-367 (GRLSVPCTPA…HKGKLKPWGQ (125 aa)) is interaction with microtubules. S246 carries the phosphoserine modification. A Phosphothreonine modification is found at T250. The span at 252 to 264 (ARQQCPQGHSATK) shows a compositional bias: polar residues. S261 is subject to Phosphoserine. A phosphothreonine mark is found at T323 and T334. A phosphoserine mark is found at S337 and S348. The tract at residues 354–427 (NYKPHKGKLK…RRNLGVTKAQ (74 aa)) is disordered. Residues 369–375 (KENNSLN) carry the KEN box motif. Residues 393–425 (LQTREERWKRQEQERKEKKEKLLEARRNLGVTK) adopt a coiled-coil conformation. Over residues 394–419 (QTREERWKRQEQERKEKKEKLLEARR) the composition is skewed to basic and acidic residues.

This sequence belongs to the NUSAP family. In terms of assembly, interacts with DNA and microtubules. Microtubule bundling is inhibited by IPO7, KPNA2 and KPNB1 while association with DNA is also inhibited by IPO7 and KPNA2. In terms of processing, ubiquitinated. Ubiquitination by FZR1 may lead to proteasome-dependent degradation of this protein.

It is found in the cytoplasm. The protein localises to the nucleus. The protein resides in the nucleolus. Its subcellular location is the cytoskeleton. It localises to the spindle. It is found in the chromosome. In terms of biological role, microtubule-associated protein with the capacity to bundle and stabilize microtubules. May associate with chromosomes and promote the organization of mitotic spindle microtubules around them. The sequence is that of Nucleolar and spindle-associated protein 1 (Nusap1) from Mus musculus (Mouse).